The sequence spans 185 residues: Ribosome-recycling factor (185 aa).

The protein belongs to the RRF family.

The protein resides in the cytoplasm. In terms of biological role, responsible for the release of ribosomes from messenger RNA at the termination of protein biosynthesis. May increase the efficiency of translation by recycling ribosomes from one round of translation to another. The chain is Ribosome-recycling factor from Bacillus cytotoxicus (strain DSM 22905 / CIP 110041 / 391-98 / NVH 391-98).